We begin with the raw amino-acid sequence, 348 residues long: Ileal sodium/bile acid cotransporter (348 aa).

The Extracellular segment spans residues 1-28; the sequence is MDNSSICNPNATICEGDSCIAPESNFNA. 2 N-linked (GlcNAc...) asparagine glycosylation sites follow: Asn-3 and Asn-10. Residues 29-49 form a helical membrane-spanning segment; the sequence is ILSVVMSTVLTILLALVMFSM. Residues 50–81 lie on the Cytoplasmic side of the membrane; it reads GCNVELHKFLGHLRRPWGIVVGFLCQFGIMPL. A helical membrane pass occupies residues 82 to 102; the sequence is TGFVLSVAFGILPVQAVVVLI. Topologically, residues 103–126 are extracellular; it reads QGCCPGGTASNILAYWVDGDMDLS. The helical transmembrane segment at 127 to 147 threads the bilayer; the sequence is VSMTTCSTLLALGMMPLCLFI. Residues 148–157 are Cytoplasmic-facing; that stretch reads YTKMWVDSGT. A helical membrane pass occupies residues 158-178; the sequence is IVIPYDSIGTSLVALVIPVSI. Topologically, residues 179–195 are extracellular; it reads GMYVNHKWPQKAKIILK. The chain crosses the membrane as a helical span at residues 196–216; sequence IGSIAGAILIVLIAVVGGILY. Topologically, residues 217–224 are cytoplasmic; that stretch reads QSAWTIEP. Residues 225–245 traverse the membrane as a helical segment; sequence KLWIIGTIYPIAGYGLGFFLA. Topologically, residues 246–284 are extracellular; the sequence is RIAGQPWYRCRTVALETGLQNTQLCSTIVQLSFSPEDLN. The chain crosses the membrane as a helical span at residues 285–305; the sequence is LVFTFPLIYSIFQIAFAAILL. Residues 306 to 348 are Cytoplasmic-facing; that stretch reads GAYVAYKKCHGKNNTELQEKTDNEMEPRSSFQETNKGFQPDEK. Residues 322-332 are compositionally biased toward basic and acidic residues; that stretch reads LQEKTDNEMEP. Residues 322–348 are disordered; the sequence is LQEKTDNEMEPRSSFQETNKGFQPDEK. At Ser-335 the chain carries Phosphoserine.

The protein belongs to the bile acid:sodium symporter (BASS) (TC 2.A.28) family. Monomer and homodimer. As to expression, mainly expressed in ileum and kidney, lower expression in jejunum.

It localises to the membrane. It carries out the reaction taurocholate(out) + 2 Na(+)(out) = taurocholate(in) + 2 Na(+)(in). It catalyses the reaction cholate(out) + 2 Na(+)(out) = cholate(in) + 2 Na(+)(in). The enzyme catalyses taurochenodeoxycholate(out) + 2 Na(+)(out) = taurochenodeoxycholate(in) + 2 Na(+)(in). The catalysed reaction is tauroursodeoxycholate(out) + 2 Na(+)(out) = tauroursodeoxycholate(in) + 2 Na(+)(in). It carries out the reaction glycocholate(out) + 2 Na(+)(out) = glycocholate(in) + 2 Na(+)(in). It catalyses the reaction tauronorcholate(out) + 2 Na(+)(out) = tauronorcholate(in) + 2 Na(+)(in). The enzyme catalyses tauroallocholate(out) + 2 Na(+)(out) = tauroallocholate(in) + 2 Na(+)(in). The catalysed reaction is taurodeoxycholate(out) + 2 Na(+)(out) = taurodeoxycholate(in) + 2 Na(+)(in). It carries out the reaction tauro-beta-muricholate(out) + 2 Na(+)(out) = tauro-beta-muricholate(in) + 2 Na(+)(in). Its function is as follows. Plays a critical role in the sodium-dependent reabsorption of bile acids from the lumen of the small intestine. Transports various bile acids, unconjugated or conjugated, such as cholate and taurocholate. Also responsible for bile acid transport in the renal proximal tubules, a salvage mechanism that helps conserve bile acids. Works collaboratively with the Na(+)-taurocholate cotransporting polypeptide (NTCP), the organic solute transporter (OST), and the bile salt export pump (BSEP), to ensure efficacious biological recycling of bile acids during enterohepatic circulation. In Cricetulus griseus (Chinese hamster), this protein is Ileal sodium/bile acid cotransporter (SLC10A2).